The chain runs to 170 residues: Ribosome maturation factor RimM (170 aa).

The PRC barrel domain occupies 96–169 (EGEFYACDVE…VVQLATLEGL (74 aa)).

Belongs to the RimM family. Binds ribosomal protein uS19.

It localises to the cytoplasm. Its function is as follows. An accessory protein needed during the final step in the assembly of 30S ribosomal subunit, possibly for assembly of the head region. Essential for efficient processing of 16S rRNA. May be needed both before and after RbfA during the maturation of 16S rRNA. It has affinity for free ribosomal 30S subunits but not for 70S ribosomes. This Sorangium cellulosum (strain So ce56) (Polyangium cellulosum (strain So ce56)) protein is Ribosome maturation factor RimM.